The chain runs to 397 residues: HTH-type transcriptional regulator GalR (397 aa).

HTH lysR-type domains follow at residues 7–64 and 99–156; these read PNLM…MRLT and FQAR…LQPT. 2 consecutive DNA-binding regions (H-T-H motif) follow at residues 24 to 43 and 116 to 135; these read VSRATEVLFRAQSVVTRAIA and MQTVARHFGLSQPAVSAALK.

The protein belongs to the LysR transcriptional regulatory family.

Functionally, transcriptional regulator for the galBCD and galTAP operons, encoding genes of the gallate degradation pathway. This chain is HTH-type transcriptional regulator GalR (galR), found in Pseudomonas putida (strain ATCC 47054 / DSM 6125 / CFBP 8728 / NCIMB 11950 / KT2440).